Reading from the N-terminus, the 259-residue chain is Nuclear egress protein 1 (259 aa).

The CCCH-type zinc-finger motif lies at 80-184 (CLDLSPYANE…YVVFQTRTLH (105 aa)).

This sequence belongs to the herpesviridae NEC1 protein family. As to quaternary structure, forms a heterohexameric complex with NEC2. Interacts with capsid vertex specific component 2/CVC2; this interaction directs the capsid to the host inner nuclear membrane to initiate budding. Post-translationally, phosphorylated at serine residues in the N-terminus. This phosphorylation regulates the localization within the inner nuclear membrane.

Its subcellular location is the host nucleus inner membrane. Its function is as follows. Plays an essential role in virion nuclear egress, the first step of virion release from infected cell. Within the host nucleus, NEC1 interacts with the newly formed capsid through the vertexes and directs it to the inner nuclear membrane by associating with NEC2. Induces the budding of the capsid at the inner nuclear membrane as well as its envelopment into the perinuclear space. There, the NEC1/NEC2 complex promotes the fusion of the enveloped capsid with the outer nuclear membrane and the subsequent release of the viral capsid into the cytoplasm where it will reach the secondary budding sites in the host Golgi or trans-Golgi network. This chain is Nuclear egress protein 1, found in Homo sapiens (Human).